The chain runs to 747 residues: H(+)/Cl(-) exchange transporter 4 (747 aa).

Positions 1–50 (MDFLEEPFPDVGTYEDFHTIDWLREKSRDTDRHRKITSKSKESIWEFIKS) are required for localization in the endoplasmic reticulum. Over 1–54 (MDFLEEPFPDVGTYEDFHTIDWLREKSRDTDRHRKITSKSKESIWEFIKSLLDA) the chain is Cytoplasmic. A run of 2 helical transmembrane segments spans residues 55–92 (WSGW…VCLS) and 138–161 (LNYL…VRVF). Residues 167 to 171 (GSGIP) carry the Selectivity filter part_1 motif. Serine 168 serves as a coordination point for chloride. Residues 170 to 177 (IPEIKTIL) constitute an intramembrane region (helical). 2 helical membrane-spanning segments follow: residues 187 to 205 (GKWT…VSSG) and 211 to 230 (EGPL…SLFS). Positions 209–213 (GKEGP) match the Selectivity filter part_2 motif. Intramembrane regions (helical) lie at residues 242–254 (VLSA…VSVA) and 258–266 (PIGGVLFSL). Transmembrane regions (helical) follow at residues 278–296 (LWRS…RSIN), 320–345 (FPFI…AWCR), 352–372 (LGRY…IVAY), 429–449 (MWQL…TFGM), and 454–473 (GLFI…VGIG). The Selectivity filter part_3 motif lies at 454–458 (GLFIP). Chloride is bound at residue phenylalanine 456. 2 intramembrane regions (helical) span residues 501–515 (GLYA…LGGV) and 519–530 (TVSLVVIMFELT). An intramembrane region (note=Loop between two helices) is located at residues 531-534 (GGLE). The chain crosses the membrane as a helical span at residues 535 to 553 (YIVPLMAAAVTSKWVADAF). Residues 554–747 (GKEGIYEAHI…NQDPESIMFN (194 aa)) lie on the Cytoplasmic side of the membrane. Tyrosine 559 contacts chloride. CBS domains are found at residues 587-653 (MRPR…QRQE) and 680-742 (LRRI…QDPE). Residues serine 597 and 618–620 (YNG) contribute to the ATP site. Positions 654–683 (GIVSNSIMYFTEEPPELPANSPHPLKLRRI) are required for localization in the endoplasmic reticulum. 725 to 728 (TKKD) is a binding site for ATP.

This sequence belongs to the chloride channel (TC 2.A.49) family. ClC-4/CLCN4 subfamily. Predominantly present in excitable tissues such as nervous system and skeletal muscle. Not detected in heart.

The protein localises to the early endosome membrane. Its subcellular location is the late endosome membrane. The protein resides in the endoplasmic reticulum membrane. It localises to the lysosome membrane. It is found in the recycling endosome membrane. Its function is as follows. Strongly outwardly rectifying, electrogenic H(+)/Cl(-)exchanger which mediates the exchange of chloride ions against protons. The CLC channel family contains both chloride channels and proton-coupled anion transporters that exchange chloride or another anion for protons. The presence of conserved gating glutamate residues is typical for family members that function as antiporters. The protein is H(+)/Cl(-) exchange transporter 4 (Clcn4) of Mus musculus (Mouse).